The chain runs to 929 residues: Diacylglycerol kinase zeta (929 aa).

Residues 1 to 14 (MEPRDPSPEARSSD) show a composition bias toward basic and acidic residues. Disordered stretches follow at residues 1-46 (MEPR…RRFP) and 59-80 (KSGL…GESE). Positions 15 to 24 (SESASASSSG) are enriched in low complexity. Basic and acidic residues predominate over residues 25–37 (SERDADPEPDKAP). Phorbol-ester/DAG-type zinc fingers lie at residues 98–153 (HIWF…NFRC) and 173–231 (HHWV…EEPC). Positions 257-281 (KASKKKKRASFKRRSSKKGPEEGRW) are disordered. Residues 258–273 (ASKKKKRASFKRRSSK) show a composition bias toward basic residues. The segment at 279 to 417 (GRWRPFIIRP…HVEEGNVVQL (139 aa)) is mediates interaction with RASGRP1. The DAGKc domain maps to 292-426 (PLMKPLLVFV…LDRWDLRAEP (135 aa)). The short motif at 362 to 370 (LSTLDQLRL) is the Nuclear export signal element. Residues 421–441 (DLRAEPNPEAGPEERDDGATD) are disordered. S706 bears the Phosphoserine mark. Positions 760 to 783 (ARPDLPTPTSPLPASPCSPTPGSL) are disordered. Positions 764–778 (LPTPTSPLPASPCSP) are enriched in pro residues. S782 carries the phosphoserine modification. ANK repeat units lie at residues 823–853 (QSRT…EILD) and 858–887 (NGET…SLMK). A PDZ-binding motif is present at residues 925 to 929 (QETAV).

The protein belongs to the eukaryotic diacylglycerol kinase family. As to quaternary structure, interacts (via PDZ-binding motif) with the PDZ domain of the syntrophin SNTG1 and that of SNX27. Interacts with IRS1 in the absence of insulin; insulin stimulation decreases this interaction. Found in a ternary complex with IRS1 and PIP5K1A in the absence of insulin. Interacts with PIP5K1A. Forms a signaling complex with RASGRP1 and HRAS.

The protein resides in the nucleus. The protein localises to the cytoplasm. It is found in the cytosol. It localises to the cell membrane. Its subcellular location is the cell projection. The protein resides in the lamellipodium. The catalysed reaction is a 1,2-diacyl-sn-glycerol + ATP = a 1,2-diacyl-sn-glycero-3-phosphate + ADP + H(+). It catalyses the reaction a 1-O-alkyl-sn-glycerol + ATP = a 1-O-alkyl-sn-glycero-3-phosphate + ADP + H(+). The enzyme catalyses 1-O-alkyl-2-acyl-sn-glycerol + ATP = 1-O-alkyl-2-acyl-sn-glycero-3-phosphate + ADP + H(+). It carries out the reaction 1,2-didecanoyl-sn-glycerol + ATP = 1,2-didecanoyl-sn-glycero-3-phosphate + ADP + H(+). The catalysed reaction is 1,2-ditetradecanoyl-sn-glycerol + ATP = 1,2-ditetradecanoyl-sn-glycero-3-phosphate + ADP + H(+). It catalyses the reaction 1-hexadecanoyl-2-(9Z-octadecenoyl)-sn-glycerol + ATP = 1-hexadecanoyl-2-(9Z-octadecenoyl)-sn-glycero-3-phosphate + ADP + H(+). The enzyme catalyses 1-hexadecanoyl-2-(5Z,8Z,11Z,14Z-eicosatetraenoyl)-sn-glycerol + ATP = 1-hexadecanoyl-2-(5Z,8Z,11Z,14Z-eicosatetraenoyl)-sn-glycero-3-phosphate + ADP + H(+). It carries out the reaction 1-octadecanoyl-2-(9Z-octadecenoyl)-sn-glycerol + ATP = 1-octadecanoyl-2-(9Z-octadecenoyl)-sn-glycero-3-phosphate + ADP + H(+). The catalysed reaction is 1-octadecanoyl-2-(5Z,8Z,11Z,14Z-eicosatetraenoyl)-sn-glycerol + ATP = 1-octadecanoyl-2-(5Z,8Z,11Z,14Z-eicosatetraenoyl)-sn-glycero-3-phosphate + ADP + H(+). It catalyses the reaction 1-octadecanoyl-2-(4Z,7Z,10Z,13Z,16Z,19Z-docosahexaenoyl)-sn-glycerol + ATP = 1-octadecanoyl-2-(4Z,7Z,10Z,13Z,16Z,19Z-docosahexaenoyl)-sn-glycero-3-phosphate + ADP + H(+). The enzyme catalyses 1,2-di-(9Z-octadecenoyl)-sn-glycerol + ATP = 1,2-di-(9Z-octadecenoyl)-sn-glycero-3-phosphate + ADP + H(+). It carries out the reaction 1-(9Z-octadecenoyl)-2-hexadecanoyl-sn-glycerol + ATP = 1-(9Z)-octadecenoyl-2-hexadecanoyl-sn-glycero-3-phosphate + ADP + H(+). The catalysed reaction is 1-eicosanoyl-2-(5Z,8Z,11Z,14Z)-eicosatetraenoyl-sn-glycerol + ATP = 1-eicosanoyl-2-(5Z,8Z,11Z,14Z)-eicosatetraenoyl-sn-glycero-3-phosphate + ADP + H(+). It catalyses the reaction 1,2-di-(5Z,8Z,11Z,14Z)-eicosatetraenoyl-sn-glycerol + ATP = 1,2-di-(5Z,8Z,11Z,14Z)-eicosatetraenoyl-sn-glycero-3-phosphate + ADP + H(+). The enzyme catalyses 1-O-hexadecyl-2-acetyl-sn-glycerol + ATP = 1-O-hexadecyl-2-acetyl-sn-glycero-3-phosphate + ADP + H(+). It carries out the reaction 1-O-hexadecyl-2-(5Z,8Z,11Z,14Z-eicosatetraenoyl)-sn-glycerol + ATP = 1-O-hexadecyl-2-(5Z,8Z,11Z,14Z-eicosatetraenoyl)-sn-glycero-3-phosphate + ADP + H(+). The catalysed reaction is 1-O-hexadecyl-2-(9Z-octadecenoyl)-sn-glycerol + ATP = 1-O-hexadecyl-2-(9Z-octadecenoyl)-sn-glycero-3-phosphate + ADP + H(+). It catalyses the reaction 1-O-hexadecyl-sn-glycerol + ATP = 1-O-hexadecyl-sn-glycero-3-phosphate + ADP + H(+). The protein operates within lipid metabolism; glycerolipid metabolism. Its function is as follows. Diacylglycerol kinase that converts diacylglycerol/DAG into phosphatidic acid/phosphatidate/PA and regulates the respective levels of these two bioactive lipids. Thereby, acts as a central switch between the signaling pathways activated by these second messengers with different cellular targets and opposite effects in numerous biological processes. Also plays an important role in the biosynthesis of complex lipids. Does not exhibit an acyl chain-dependent substrate specificity among diacylglycerol species. Can also phosphorylate 1-alkyl-2-acylglycerol in vitro but less efficiently and with a preference for alkylacylglycerols containing an arachidonoyl group. The biological processes it is involved in include T cell activation since it negatively regulates T-cell receptor signaling which is in part mediated by diacylglycerol. By generating phosphatidic acid, stimulates PIP5KIA activity which regulates actin polymerization. Through the same mechanism could also positively regulate insulin-induced translocation of SLC2A4 to the cell membrane. Regulates RASGRP1 activity. This chain is Diacylglycerol kinase zeta, found in Rattus norvegicus (Rat).